We begin with the raw amino-acid sequence, 288 residues long: Probable coatomer subunit epsilon (288 aa).

The residue at position 262 (S262) is a Phosphoserine.

The protein belongs to the COPE family. Oligomeric complex that consists of at least the alpha, beta, beta', gamma, delta, epsilon and zeta subunits.

Its subcellular location is the cytoplasm. The protein resides in the golgi apparatus membrane. It localises to the cytoplasmic vesicle. The protein localises to the COPI-coated vesicle membrane. Its function is as follows. The coatomer is a cytosolic protein complex that binds to dilysine motifs and reversibly associates with Golgi non-clathrin-coated vesicles, which further mediate biosynthetic protein transport from the ER, via the Golgi up to the trans Golgi network. The coatomer complex is required for budding from Golgi membranes, and is essential for the retrograde Golgi-to-ER transport of dilysine-tagged proteins. In Schizosaccharomyces pombe (strain 972 / ATCC 24843) (Fission yeast), this protein is Probable coatomer subunit epsilon (sec28).